A 266-amino-acid chain; its full sequence is Undecaprenyl-diphosphatase (266 aa).

Helical transmembrane passes span 39–59, 86–106, 112–132, 147–167, 189–209, 216–236, and 246–266; these read PGAS…AYYF, SIFI…IFIP, VLRS…FMYL, NFSN…PGVS, FSFL…FVSS, LGFF…LLAI, and NGLK…LLNL.

Belongs to the UppP family.

Its subcellular location is the cell inner membrane. It carries out the reaction di-trans,octa-cis-undecaprenyl diphosphate + H2O = di-trans,octa-cis-undecaprenyl phosphate + phosphate + H(+). Catalyzes the dephosphorylation of undecaprenyl diphosphate (UPP). Confers resistance to bacitracin. This is Undecaprenyl-diphosphatase from Prochlorococcus marinus (strain MIT 9301).